A 408-amino-acid polypeptide reads, in one-letter code: Endo-1,4-beta-xylanase A (408 aa).

Residues 1 to 19 (MKLSASFAALALLLPFVQA) form the signal peptide. Positions 20 to 55 (QSPVWGQCGGIGWTGPTTCTAGNVCQEYSAYYSQCI) constitute a CBM1 domain. The segment at 64-89 (TSVSTAPNPPPTSHTSTSSAPSGAST) is disordered. Low complexity predominate over residues 76 to 89 (SHTSTSSAPSGAST). One can recognise a GH10 domain in the interval 88–405 (STSTAKLNTL…KPAYDGIAIG (318 aa)). E222 acts as the Proton donor in catalysis. E327 (nucleophile) is an active-site residue. An intrachain disulfide couples C355 to C361.

This sequence belongs to the glycosyl hydrolase 10 (cellulase F) family.

It localises to the secreted. The catalysed reaction is Endohydrolysis of (1-&gt;4)-beta-D-xylosidic linkages in xylans.. Its pathway is glycan degradation; xylan degradation. Its function is as follows. Endo-1,4-beta-xylanase involved in the hydrolysis of xylan, a major structural heterogeneous polysaccharide found in plant biomass representing the second most abundant polysaccharide in the biosphere, after cellulose. In Phanerodontia chrysosporium (White-rot fungus), this protein is Endo-1,4-beta-xylanase A (xynA).